A 292-amino-acid polypeptide reads, in one-letter code: Ventral anterior homeobox 2 (292 aa).

A compositionally biased stretch (basic and acidic residues) spans 1-36 (MGDGGAERDRGPKRREEPGGRSGRHGEHRGAEDLRA). Positions 1–74 (MGDGGAERDR…DGQQALGETD (74 aa)) are disordered. Residues 102 to 161 (PKRTRTSFTAEQLYRLEMEFQRCQYVVGRERTELARQLNLSETQVKVWFQNRRTKQKKDQ) constitute a DNA-binding region (homeobox). A disordered region spans residues 207–242 (LPGLPASHRGTSLVDPRNSSPRLNPMPSASASSPLP).

It belongs to the EMX homeobox family. Expressed in the developing and mature retina.

It is found in the nucleus. Transcription factor that may function in dorsoventral specification of the forebrain. Regulates the expression of Wnt signaling antagonists including the expression of a truncated TCF7L2 isoform that cannot bind CTNNB1 and acts therefore as a potent dominant-negative Wnt antagonist. Plays a crucial role in eye development and, in particular, in the specification of the ventral optic vesicle. May be a regulator of axial polarization in the retina. The protein is Ventral anterior homeobox 2 (Vax2) of Mus musculus (Mouse).